We begin with the raw amino-acid sequence, 194 residues long: dCTP deaminase, dUMP-forming (194 aa).

DCTP contacts are provided by residues 104 to 109, D122, 130 to 132, Q151, Y165, K172, and Q176; these read RSSLGR and TLE. Catalysis depends on E132, which acts as the Proton donor/acceptor.

It belongs to the dCTP deaminase family. In terms of assembly, homotrimer.

The enzyme catalyses dCTP + 2 H2O = dUMP + NH4(+) + diphosphate. It functions in the pathway pyrimidine metabolism; dUMP biosynthesis; dUMP from dCTP: step 1/1. Its function is as follows. Bifunctional enzyme that catalyzes both the deamination of dCTP to dUTP and the hydrolysis of dUTP to dUMP without releasing the toxic dUTP intermediate. This chain is dCTP deaminase, dUMP-forming, found in Dictyoglomus thermophilum (strain ATCC 35947 / DSM 3960 / H-6-12).